A 323-amino-acid polypeptide reads, in one-letter code: Aquaporin-4 (323 aa).

The Cytoplasmic segment spans residues 1 to 36 (MSDRPAARRWGKCGPLCTRESIMVAFKGVWTQTFWK). 2 S-palmitoyl cysteine lipidation sites follow: Cys13 and Cys17. A helical transmembrane segment spans residues 37–57 (AVTAEFLAMLIFVLLSLGSTI). Over 58 to 69 (NWGGAEKPLPVD) the chain is Extracellular. Residues 70-89 (MVLISLCFGLSIATMVQCFG) form a helical membrane-spanning segment. The Cytoplasmic segment spans residues 90–93 (HISG). Positions 94 to 101 (GHINPAVT) form an intramembrane region, discontinuously helical. Positions 97–99 (NPA) match the NPA 1 motif. Residues 102-115 (VAMVCTRRISIAKS) are Cytoplasmic-facing. Ser111 is subject to Phosphoserine; by PKG. A helical transmembrane segment spans residues 116–136 (VFYIAAQCLGAIIGAGILYLV). The Extracellular portion of the chain corresponds to 137–155 (TPPSVVGGLGVTTVHGNLS). N-linked (GlcNAc...) asparagine glycosylation is present at Asn153. Residues 156-176 (AGHGLLVELIITFQLVFTIFA) traverse the membrane as a helical segment. At 177–184 (SCDSKRTD) the chain is on the cytoplasmic side. Phosphoserine; by PKC is present on Ser180. Residues 185 to 205 (VTGSIALAIGISVAIGHLFAI) traverse the membrane as a helical segment. Asn206 carries an N-linked (GlcNAc...) asparagine glycan. The Extracellular portion of the chain corresponds to 206-208 (NYT). The discontinuously helical intramembrane region spans 209 to 222 (GASMNPARSFGPAV). Positions 213–215 (NPA) match the NPA 2 motif. The Extracellular portion of the chain corresponds to 223-231 (IMGNWENHW). Residues 232–252 (IYWVGPIIGAVLAGGLYEYVF) form a helical membrane-spanning segment. The Cytoplasmic portion of the chain corresponds to 253–323 (CPDVELKRRF…DPSGEVLSSV (71 aa)). 2 positions are modified to phosphoserine: Ser276 and Ser285. Thr289 carries the post-translational modification Phosphothreonine. Phosphoserine is present on Ser321.

This sequence belongs to the MIP/aquaporin (TC 1.A.8) family. In terms of assembly, homotetramer. The tetramers can form oligomeric arrays in membranes. The size of the oligomers differs between tissues and is smaller in skeletal muscle than in brain. Interaction between AQP4 oligomeric arrays in close-by cells can contribute to cell-cell adhesion. Part of a complex containing MLC1, TRPV4, HEPACAM and ATP1B1. Post-translationally, phosphorylation by PKC at Ser-180 reduces conductance by 50%. Phosphorylation by PKG at Ser-111 in response to glutamate increases conductance by 40%. In terms of processing, isoform 2: Palmitoylated on its N-terminal region. Isoform 1: Not palmitoylated. In terms of tissue distribution, detected in brain and lung.

It localises to the cell membrane. The protein resides in the basolateral cell membrane. It is found in the endosome membrane. Its subcellular location is the sarcolemma. The protein localises to the cell projection. The catalysed reaction is H2O(in) = H2O(out). Forms a water-specific channel. Plays an important role in brain water homeostasis and in glymphatic solute transport. Required for a normal rate of water exchange across the blood brain interface. Required for normal levels of cerebrospinal fluid influx into the brain cortex and parenchyma along paravascular spaces that surround penetrating arteries, and for normal drainage of interstitial fluid along paravenous drainage pathways. Thereby, it is required for normal clearance of solutes from the brain interstitial fluid, including soluble beta-amyloid peptides derived from APP. Plays a redundant role in urinary water homeostasis and urinary concentrating ability. The polypeptide is Aquaporin-4 (AQP4) (Bos taurus (Bovine)).